A 503-amino-acid chain; its full sequence is Cytochrome c-552 (503 aa).

Positions 1–16 (MKKNTIILVGALIAIA) are cleaved as a signal peptide. His-102 serves as a coordination point for heme c. Positions 130, 133, and 134 each coordinate heme. Cys-168, Cys-171, His-172, Cys-210, Cys-213, and His-214 together coordinate heme c. Ca(2+) is bound by residues Glu-216, Tyr-217, Lys-273, and Gln-275. Tyr-217 contacts substrate. A substrate-binding site is contributed by His-276. Heme c is bound by residues His-287, Cys-294, Cys-297, His-298, His-312, Cys-325, Cys-328, His-329, and His-404.

Belongs to the cytochrome c-552 family. The cofactor is Ca(2+). It depends on heme c as a cofactor.

It localises to the periplasm. It carries out the reaction 6 Fe(III)-[cytochrome c] + NH4(+) + 2 H2O = 6 Fe(II)-[cytochrome c] + nitrite + 8 H(+). It functions in the pathway nitrogen metabolism; nitrate reduction (assimilation). Its function is as follows. Catalyzes the reduction of nitrite to ammonia, consuming six electrons in the process. The polypeptide is Cytochrome c-552 (Maridesulfovibrio salexigens (strain ATCC 14822 / DSM 2638 / NCIMB 8403 / VKM B-1763) (Desulfovibrio salexigens)).